The following is a 354-amino-acid chain: MASLRKPSNHADRACSRRLRVATRVAGRRMCRPVAATKASTAVTTDMSKRTVPTKLEEGEMPLNTYSNKAPFKAKVRSVEKITGPKATGETCHIIIETEGKIPFWEGQSYGVIPPGTKINSKGKEVPTARLYSIASSRYGDDGDGQTASLCVRRAVYVDPETGKEDPAKKGLCSNFLCDATPGTEISMTGPTGKVLLLPADANAPLICVATGTGIAPFRSFWRRCFIENVPSYKFTGLFWLFMGVGNSDAKLYDEELQAIAKAYPGQFRLDYALSREQNNRKGGKMYIQDKVEEYADEIFDLLDNGAHMYFCGLKGMMPGIQDMLERVAKEKGLNYEEWVEGLKHKNQWHVEVY.

The transit peptide at 1–35 (MASLRKPSNHADRACSRRLRVATRVAGRRMCRPVA) directs the protein to the chloroplast. Residues 69–198 (KAPFKAKVRS…TGPTGKVLLL (130 aa)) enclose the FAD-binding FR-type domain. N6,N6,N6-trimethyllysine occurs at positions 118 and 124. FAD-binding positions include 130 to 133 (RLYS), 151 to 153 (CVR), and tyrosine 157. Positions 133 and 153 each coordinate NADP(+). Residue lysine 170 is modified to N6,N6-dimethyllysine. FAD is bound by residues 172 to 174 (LCS) and threonine 213. Residues threonine 213, 245 to 246 (VG), 275 to 276 (SR), lysine 285, 313 to 314 (GL), and glutamate 352 contribute to the NADP(+) site.

This sequence belongs to the ferredoxin--NADP reductase type 1 family. The cofactor is FAD.

The protein localises to the plastid. It localises to the chloroplast stroma. The protein resides in the chloroplast thylakoid membrane. It carries out the reaction 2 reduced [2Fe-2S]-[ferredoxin] + NADP(+) + H(+) = 2 oxidized [2Fe-2S]-[ferredoxin] + NADPH. It participates in energy metabolism; photosynthesis. Its function is as follows. May play a key role in regulating the relative amounts of cyclic and non-cyclic electron flow to meet the demands of the plant for ATP and reducing power. The chain is Ferredoxin--NADP reductase, chloroplastic (PETH) from Chlamydomonas reinhardtii (Chlamydomonas smithii).